We begin with the raw amino-acid sequence, 314 residues long: Ribonuclease Z (314 aa).

Histidine 60, histidine 62, aspartate 64, histidine 65, histidine 140, aspartate 209, and histidine 269 together coordinate Zn(2+). Aspartate 64 acts as the Proton acceptor in catalysis.

This sequence belongs to the RNase Z family. In terms of assembly, homodimer. The cofactor is Zn(2+).

The enzyme catalyses Endonucleolytic cleavage of RNA, removing extra 3' nucleotides from tRNA precursor, generating 3' termini of tRNAs. A 3'-hydroxy group is left at the tRNA terminus and a 5'-phosphoryl group is left at the trailer molecule.. Its function is as follows. Zinc phosphodiesterase, which displays some tRNA 3'-processing endonuclease activity. Probably involved in tRNA maturation, by removing a 3'-trailer from precursor tRNA. This Methanococcus maripaludis (strain C5 / ATCC BAA-1333) protein is Ribonuclease Z.